The sequence spans 417 residues: Putative transporter AmpG 1 (417 aa).

A run of 12 helical transmembrane segments spans residues 7–27, 42–62, 78–98, 104–124, 143–163, 171–191, 225–245, 273–293, 301–321, 328–348, 366–386, and 389–409; these read LCIIWLFGLISGFNLMITGNT, IGILSFITLPYSINFLLAPIF, LSWICLTSSALIFLIYIFSFL, LLLFAFTALIISFFSAAQDTI, GIYIFGYRVGMLLAGSGAIYL, EIYKIFAGLVFIYLILLIVGI, ALKPIGSVYFIILILIFLVLY, VGKFCGVVGAIIGGLVGGVIM, SIFLFGIIHALGHILFIFLEI, LLFITIGIASITGGMTMTAYI, FLSSMMGISRSIFPIISGYMV, and FGWQNFFLFTTIITIPSLLIL.

Belongs to the major facilitator superfamily.

The protein resides in the cell inner membrane. This Rickettsia conorii (strain ATCC VR-613 / Malish 7) protein is Putative transporter AmpG 1 (ampG1).